The chain runs to 210 residues: Ribosomal RNA small subunit methyltransferase G (210 aa).

S-adenosyl-L-methionine contacts are provided by residues glycine 76, leucine 81, 127–128 (VE), and arginine 142.

Belongs to the methyltransferase superfamily. RNA methyltransferase RsmG family.

It is found in the cytoplasm. It catalyses the reaction guanosine(527) in 16S rRNA + S-adenosyl-L-methionine = N(7)-methylguanosine(527) in 16S rRNA + S-adenosyl-L-homocysteine. Its function is as follows. Specifically methylates the N7 position of guanine in position 527 of 16S rRNA. The protein is Ribosomal RNA small subunit methyltransferase G of Aliivibrio fischeri (strain ATCC 700601 / ES114) (Vibrio fischeri).